The following is a 163-amino-acid chain: ATP synthase subunit b 2 (163 aa).

The chain crosses the membrane as a helical span at residues 5 to 25; the sequence is SLATLWATIALIIFLGVAIYI.

The protein belongs to the ATPase B chain family. In terms of assembly, F-type ATPases have 2 components, F(1) - the catalytic core - and F(0) - the membrane proton channel. F(1) has five subunits: alpha(3), beta(3), gamma(1), delta(1), epsilon(1). F(0) has three main subunits: a(1), b(2) and c(10-14). The alpha and beta chains form an alternating ring which encloses part of the gamma chain. F(1) is attached to F(0) by a central stalk formed by the gamma and epsilon chains, while a peripheral stalk is formed by the delta and b chains.

Its subcellular location is the cell inner membrane. In terms of biological role, f(1)F(0) ATP synthase produces ATP from ADP in the presence of a proton or sodium gradient. F-type ATPases consist of two structural domains, F(1) containing the extramembraneous catalytic core and F(0) containing the membrane proton channel, linked together by a central stalk and a peripheral stalk. During catalysis, ATP synthesis in the catalytic domain of F(1) is coupled via a rotary mechanism of the central stalk subunits to proton translocation. Component of the F(0) channel, it forms part of the peripheral stalk, linking F(1) to F(0). The sequence is that of ATP synthase subunit b 2 from Mesorhizobium japonicum (strain LMG 29417 / CECT 9101 / MAFF 303099) (Mesorhizobium loti (strain MAFF 303099)).